The following is a 602-amino-acid chain: Threonine--tRNA ligase (602 aa).

The segment at 208–499 (DHRKLGTELK…LTEHCAGEFP (292 aa)) is catalytic. Positions 300, 351, and 476 each coordinate Zn(2+).

The protein belongs to the class-II aminoacyl-tRNA synthetase family. In terms of assembly, homodimer. It depends on Zn(2+) as a cofactor.

Its subcellular location is the cytoplasm. It carries out the reaction tRNA(Thr) + L-threonine + ATP = L-threonyl-tRNA(Thr) + AMP + diphosphate + H(+). In terms of biological role, catalyzes the attachment of threonine to tRNA(Thr) in a two-step reaction: L-threonine is first activated by ATP to form Thr-AMP and then transferred to the acceptor end of tRNA(Thr). Also edits incorrectly charged L-seryl-tRNA(Thr). This chain is Threonine--tRNA ligase, found in Campylobacter jejuni subsp. jejuni serotype O:23/36 (strain 81-176).